A 401-amino-acid chain; its full sequence is MTLPKIKQVRAWFTGGATAEKGAGGGDYHDQGANHWIDDHIATPMSKYRDYEQLRQSFGINVLGTLVVEVEAENGQTGFAVSTAGEMGCFIVEKHLNRFIEGKCVSDIKLIHDQMLNATLYYSGSGGLVMNTISCVDLALWDLFGKVVGLPVYKLLGGAVRDEIQFYATGARPDLAKEMGFIGGKMPTHWGPHDGDAGIRKDAAMVADMREKCGEDFWLMLDCWMSQDVNYATKLAHACAPYNLKWIEECLPPQQYEGYRELKRNAPVGMMVTSGEHHGTLQSFRTLSETGIDIMQPDVGWCGGLTTLVEIAAIAKSRGQLVVPHGSSVYSHHAVITFTNTPFSEFLMTSPDCSTMRPQFDPILLNEPVPVNGRIHKSVLDKPGFGVELNRDCNLKRPYSH.

2 residues coordinate substrate: His-29 and Arg-55. Mg(2+) is bound by residues Asp-222, Glu-248, and Glu-276. The active-site Proton acceptor is His-325. Residue Glu-345 coordinates substrate.

It belongs to the mandelate racemase/muconate lactonizing enzyme family. RhamD subfamily. In terms of assembly, homooctamer; tetramer of dimers. Requires Mg(2+) as cofactor.

It catalyses the reaction L-rhamnonate = 2-dehydro-3-deoxy-L-rhamnonate + H2O. Catalyzes the dehydration of L-rhamnonate to 2-keto-3-deoxy-L-rhamnonate (KDR). The protein is L-rhamnonate dehydratase of Escherichia coli O157:H7.